The chain runs to 67 residues: Large ribosomal subunit protein uL30 (67 aa).

The protein belongs to the universal ribosomal protein uL30 family. Part of the 50S ribosomal subunit.

This chain is Large ribosomal subunit protein uL30, found in Sinorhizobium medicae (strain WSM419) (Ensifer medicae).